A 373-amino-acid chain; its full sequence is tRNA-specific 2-thiouridylase MnmA (373 aa).

Residues 12-19 (GMSGGVDS) and Met38 each bind ATP. An interaction with target base in tRNA region spans residues 98-100 (NPD). Cys103 functions as the Nucleophile in the catalytic mechanism. An intrachain disulfide couples Cys103 to Cys200. Gly127 provides a ligand contact to ATP. The interaction with tRNA stretch occupies residues 150 to 152 (KDQ). Residue Cys200 is the Cysteine persulfide intermediate of the active site. Residues 312-313 (RY) form an interaction with tRNA region.

This sequence belongs to the MnmA/TRMU family.

The protein resides in the cytoplasm. It carries out the reaction S-sulfanyl-L-cysteinyl-[protein] + uridine(34) in tRNA + AH2 + ATP = 2-thiouridine(34) in tRNA + L-cysteinyl-[protein] + A + AMP + diphosphate + H(+). Catalyzes the 2-thiolation of uridine at the wobble position (U34) of tRNA, leading to the formation of s(2)U34. The sequence is that of tRNA-specific 2-thiouridylase MnmA from Streptococcus mutans serotype c (strain ATCC 700610 / UA159).